We begin with the raw amino-acid sequence, 184 residues long: Photosystem I assembly protein Ycf4 (184 aa).

Transmembrane regions (helical) follow at residues I19–G39 and I57–S77.

Belongs to the Ycf4 family.

It localises to the plastid. Its subcellular location is the chloroplast thylakoid membrane. Seems to be required for the assembly of the photosystem I complex. In Cucumis sativus (Cucumber), this protein is Photosystem I assembly protein Ycf4.